The sequence spans 578 residues: Sulfite reductase [NADPH] hemoprotein beta-component (578 aa).

Residues 1–11 (MSANQQSNSQE) show a composition bias toward polar residues. The disordered stretch occupies residues 1–20 (MSANQQSNSQEVLGEVLGPL). Positions 441, 447, 487, and 491 each coordinate [4Fe-4S] cluster. C491 serves as a coordination point for siroheme.

It belongs to the nitrite and sulfite reductase 4Fe-4S domain family. In terms of assembly, alpha(8)-beta(8). The alpha component is a flavoprotein, the beta component is a hemoprotein. Requires siroheme as cofactor. It depends on [4Fe-4S] cluster as a cofactor.

The enzyme catalyses hydrogen sulfide + 3 NADP(+) + 3 H2O = sulfite + 3 NADPH + 4 H(+). It participates in sulfur metabolism; hydrogen sulfide biosynthesis; hydrogen sulfide from sulfite (NADPH route): step 1/1. Its function is as follows. Component of the sulfite reductase complex that catalyzes the 6-electron reduction of sulfite to sulfide. This is one of several activities required for the biosynthesis of L-cysteine from sulfate. This is Sulfite reductase [NADPH] hemoprotein beta-component from Vibrio campbellii (strain ATCC BAA-1116).